A 553-amino-acid chain; its full sequence is Dihydroxy-acid dehydratase (553 aa).

Asp78 is a Mg(2+) binding site. Cys119 is a binding site for [2Fe-2S] cluster. The Mg(2+) site is built by Asp120 and Lys121. Residue Lys121 is modified to N6-carboxylysine. Cys193 is a binding site for [2Fe-2S] cluster. Glu441 is a Mg(2+) binding site. The active-site Proton acceptor is the Ser467.

Belongs to the IlvD/Edd family. As to quaternary structure, homodimer. [2Fe-2S] cluster is required as a cofactor. Requires Mg(2+) as cofactor.

The enzyme catalyses (2R)-2,3-dihydroxy-3-methylbutanoate = 3-methyl-2-oxobutanoate + H2O. The catalysed reaction is (2R,3R)-2,3-dihydroxy-3-methylpentanoate = (S)-3-methyl-2-oxopentanoate + H2O. Its pathway is amino-acid biosynthesis; L-isoleucine biosynthesis; L-isoleucine from 2-oxobutanoate: step 3/4. The protein operates within amino-acid biosynthesis; L-valine biosynthesis; L-valine from pyruvate: step 3/4. Its function is as follows. Functions in the biosynthesis of branched-chain amino acids. Catalyzes the dehydration of (2R,3R)-2,3-dihydroxy-3-methylpentanoate (2,3-dihydroxy-3-methylvalerate) into 2-oxo-3-methylpentanoate (2-oxo-3-methylvalerate) and of (2R)-2,3-dihydroxy-3-methylbutanoate (2,3-dihydroxyisovalerate) into 2-oxo-3-methylbutanoate (2-oxoisovalerate), the penultimate precursor to L-isoleucine and L-valine, respectively. In Geobacter metallireducens (strain ATCC 53774 / DSM 7210 / GS-15), this protein is Dihydroxy-acid dehydratase.